The following is a 696-amino-acid chain: Interleukin-1 receptor accessory protein-like 1 (696 aa).

The N-terminal stretch at 1–18 (MKAPIPHLILLYATFTQS) is a signal peptide. In terms of domain architecture, Ig-like C2-type 1 spans 19–134 (LKVVTKRGSA…YCMKVSISLT (116 aa)). At 19-357 (LKVVTKRGSA…LLHKRELMYT (339 aa)) the chain is on the extracellular side. 2 disulfides stabilise this stretch: cysteine 31–cysteine 126 and cysteine 53–cysteine 118. 3 N-linked (GlcNAc...) asparagine glycosylation sites follow: asparagine 63, asparagine 122, and asparagine 138. 2 disulfides stabilise this stretch: cysteine 143-cysteine 185 and cysteine 164-cysteine 216. Ig-like C2-type domains are found at residues 143–232 (CYNS…TELT) and 242–350 (PKLL…VLLH). Asparagine 213, asparagine 264, and asparagine 331 each carry an N-linked (GlcNAc...) asparagine glycan. Cysteine 267 and cysteine 334 form a disulfide bridge. A helical membrane pass occupies residues 358 to 378 (VELAGGLGAILLLLVCLVTIY). At 379 to 696 (KCYKIEIMLF…RETSISSVIW (318 aa)) the chain is on the cytoplasmic side. A TIR domain is found at 403-559 (KDYDAYLSYT…KFWKRLQYEM (157 aa)). Residue glutamate 491 is part of the active site. The tract at residues 549 to 644 (SKFWKRLQYE…TGTLPLTSIG (96 aa)) is interaction with NCS1. The segment at 659 to 680 (GQRPQTKSSREQNPDEAHTNSA) is disordered. Residues 666–676 (SSREQNPDEAH) show a composition bias toward basic and acidic residues.

The protein belongs to the interleukin-1 receptor family. In terms of assembly, homodimer. Interacts (calcium-independent) with NCS1. Interacts (via the first immunoglobilin domain) with PTPRD (via the second immunoglobilin domain); this interaction is PTPRD-splicing-dependent and induces pre- and post-synaptic differentiation of neurons and is required for IL1RAPL1-mediated synapse formation. Detected at low levels in heart, skeletal muscle, ovary, skin, amygdala, caudate nucleus, corpus callosum, hippocampus, substantia nigra and thalamus. Detected at very low levels in tonsil, prostate, testis, small intestine, placenta, colon and fetal liver.

The protein localises to the cell membrane. It localises to the cytoplasm. It is found in the cell projection. The protein resides in the axon. Its subcellular location is the dendrite. The enzyme catalyses NAD(+) + H2O = ADP-D-ribose + nicotinamide + H(+). Its function is as follows. May regulate secretion and presynaptic differentiation through inhibition of the activity of N-type voltage-gated calcium channel. May activate the MAP kinase JNK. Plays a role in neurite outgrowth. During dendritic spine formation can bidirectionally induce pre- and post-synaptic differentiation of neurons by trans-synaptically binding to PTPRD. The protein is Interleukin-1 receptor accessory protein-like 1 (IL1RAPL1) of Homo sapiens (Human).